Here is a 286-residue protein sequence, read N- to C-terminus: Shikimate dehydrogenase (NADP(+)) (286 aa).

Shikimate contacts are provided by residues 20–22 (SLS) and Ser-67. Residue Lys-71 is the Proton acceptor of the active site. The shikimate site is built by Asn-92 and Asp-107. Residues 131–135 (GGGGA) and Ala-230 contribute to the NADP(+) site. Tyr-232 contributes to the shikimate binding site. Gly-253 is a binding site for NADP(+).

The protein belongs to the shikimate dehydrogenase family. In terms of assembly, homodimer.

The enzyme catalyses shikimate + NADP(+) = 3-dehydroshikimate + NADPH + H(+). The protein operates within metabolic intermediate biosynthesis; chorismate biosynthesis; chorismate from D-erythrose 4-phosphate and phosphoenolpyruvate: step 4/7. Involved in the biosynthesis of the chorismate, which leads to the biosynthesis of aromatic amino acids. Catalyzes the reversible NADPH linked reduction of 3-dehydroshikimate (DHSA) to yield shikimate (SA). The polypeptide is Shikimate dehydrogenase (NADP(+)) (Lactococcus lactis subsp. cremoris (strain MG1363)).